A 443-amino-acid chain; its full sequence is MSSSPNIGFISLGCPKNLVDSERILTELRSDGYNIISSYEGADLVIVNTCGFIDSAVQESLESIGEALENNGKVIVTGCLGAKENQIREIHPQVLEITGPHSYEAVMKHVHKYVPKPEYSPYTSLVPKQGIKLTPKHYAYLKISEGCDHRCTFCIIPSMRGDLDSRSIVHILDEAKRLVDAGVKEILVVSQDTSAYALDKKKENASKTVFWNGMPIKNDLITLCEKLGSLGAWVRLHYVYPYPHVDNLIPLMAEGKILPYLDIPLQHASPKILKMMKRPGSIERTLERIKKWREICPDLTLRSTFIVGFPGETEEDFQLLLDFLQEAQLDRVGCFKFSPVEGAVATDMEDQIPEEIKEERFHRFMQLQQKISAERLRQKIGRTLSVIIDEIDEEGIIGRTMADAPEIDGVVYVDNFSKVEVKLGQIINVTITNADEYDLWGEI.

One can recognise an MTTase N-terminal domain in the interval 5-115 (PNIGFISLGC…VMKHVHKYVP (111 aa)). Residues Cys14, Cys50, Cys79, Cys147, Cys151, and Cys154 each coordinate [4Fe-4S] cluster. One can recognise a Radical SAM core domain in the interval 133–374 (LTPKHYAYLK…MQLQQKISAE (242 aa)). Residues 377-443 (RQKIGRTLSV…ADEYDLWGEI (67 aa)) form the TRAM domain.

Belongs to the methylthiotransferase family. RimO subfamily. [4Fe-4S] cluster serves as cofactor.

It is found in the cytoplasm. The enzyme catalyses L-aspartate(89)-[ribosomal protein uS12]-hydrogen + (sulfur carrier)-SH + AH2 + 2 S-adenosyl-L-methionine = 3-methylsulfanyl-L-aspartate(89)-[ribosomal protein uS12]-hydrogen + (sulfur carrier)-H + 5'-deoxyadenosine + L-methionine + A + S-adenosyl-L-homocysteine + 2 H(+). In terms of biological role, catalyzes the methylthiolation of an aspartic acid residue of ribosomal protein uS12. This is Ribosomal protein uS12 methylthiotransferase RimO from Histophilus somni (strain 2336) (Haemophilus somnus).